The following is a 173-amino-acid chain: Disulfide bond formation protein B (173 aa).

Over 1–11 (MNALQWSFRAQ) the chain is Cytoplasmic. A helical membrane pass occupies residues 12 to 28 (CLTGFLFCTGLLAYAIF). Over 29–46 (LQLHQGLEPCPLCIFQRI) the chain is Periplasmic. Cys-38 and Cys-41 are joined by a disulfide. A helical transmembrane segment spans residues 47-63 (AFAVLGILFLIAGLYNS). At 64–70 (SNVYTRK) the chain is on the cytoplasmic side. Residues 71 to 88 (AYGLLIFLTAIIGTGIAG) form a helical membrane-spanning segment. Over 89-145 (RHVWVQLMPHNTISSCGSPLSFLSETMGPFEVFRTVLTGTSNCGNIDWRFLGLSMPM) the chain is Periplasmic. Residues Cys-104 and Cys-131 are joined by a disulfide bond. The helical transmembrane segment at 146-164 (WSMFWFVALALLGLLVGFK) threads the bilayer. The Cytoplasmic segment spans residues 165–173 (AERRKPLFS).

The protein belongs to the DsbB family.

It localises to the cell inner membrane. In terms of biological role, required for disulfide bond formation in some periplasmic proteins. Acts by oxidizing the DsbA protein. This is Disulfide bond formation protein B from Xylella fastidiosa (strain Temecula1 / ATCC 700964).